The primary structure comprises 370 residues: L-selectin (370 aa).

The N-terminal stretch at 1–28 (MLCPWKCQNAQRGLWNVFKLWVWIMLCC) is a signal peptide. A propeptide spanning residues 29–38 (DFFAHHGTDC) is cleaved from the precursor. Residues 39–333 (WTYHYSKRPM…SINEESDYNP (295 aa)) lie on the Extracellular side of the membrane. In terms of domain architecture, C-type lectin spans 55–155 (AFCRENYTDL…ACHKAKTALC (101 aa)). Intrachain disulfides connect C57–C155, C128–C147, C128–C160, C160–C171, C165–C180, C182–C191, C197–C241, C227–C254, C259–C303, and C289–C316. N60, N77, and N104 each carry an N-linked (GlcNAc...) asparagine glycan. 5 residues coordinate Ca(2+): E118, N120, E126, N143, and D144. Residues 156–192 (YTASCKPWSCSGHGQCVEVINNYTCNCDLGYYGPECQ) enclose the EGF-like domain. The N-linked (GlcNAc...) asparagine glycan is linked to N177. 2 consecutive Sushi domains span residues 195–256 (TQCV…TCRV) and 257–318 (IQCE…RCQK). N-linked (GlcNAc...) asparagine glycans are attached at residues N216, N226, and N246. N308 and N320 each carry an N-linked (GlcNAc...) asparagine glycan. The helical transmembrane segment at 334 to 354 (LFIPVAVMVTAFSGLAFIIWL) threads the bilayer. Residues 355–370 (ARRLKRKSKKVSEKHG) are Cytoplasmic-facing.

The protein belongs to the selectin/LECAM family. As to quaternary structure, interaction with SELPLG/PSGL1 and PODXL2 is required for promoting recruitment and rolling of leukocytes. This interaction is dependent on the sialyl Lewis X glycan modification of SELPLG and PODXL2, and tyrosine sulfation modifications of SELPLG. Sulfation on 'Tyr-51' of SELPLG is important for L-selectin binding. Post-translationally, N-glycosylated. In terms of tissue distribution, highly expressed in lymphocytes from peripheral lymph nodes. Low in lymphocytes isolated from Peyer patches.

Its subcellular location is the cell membrane. Calcium-dependent lectin that mediates cell adhesion by binding to glycoproteins on neighboring cells. Mediates the adherence of lymphocytes to endothelial cells of high endothelial venules in peripheral lymph nodes. Promotes initial tethering and rolling of leukocytes in endothelia. The protein is L-selectin (SELL) of Bos taurus (Bovine).